The sequence spans 417 residues: Serine hydroxymethyltransferase (417 aa).

The residue at position 54 (Lys-54) is an N6-acetyllysine. Residues Leu-121 and 125-127 (GHL) each bind (6S)-5,6,7,8-tetrahydrofolate. Residue Lys-229 is modified to N6-(pyridoxal phosphate)lysine. N6-acetyllysine is present on residues Lys-250, Lys-285, and Lys-354. 355–357 (SPF) provides a ligand contact to (6S)-5,6,7,8-tetrahydrofolate. Position 375 is an N6-acetyllysine (Lys-375).

Belongs to the SHMT family. Homodimer. Pyridoxal 5'-phosphate serves as cofactor.

Its subcellular location is the cytoplasm. The catalysed reaction is (6R)-5,10-methylene-5,6,7,8-tetrahydrofolate + glycine + H2O = (6S)-5,6,7,8-tetrahydrofolate + L-serine. Its pathway is one-carbon metabolism; tetrahydrofolate interconversion. It participates in amino-acid biosynthesis; glycine biosynthesis; glycine from L-serine: step 1/1. Functionally, catalyzes the reversible interconversion of serine and glycine with tetrahydrofolate (THF) serving as the one-carbon carrier. This reaction serves as the major source of one-carbon groups required for the biosynthesis of purines, thymidylate, methionine, and other important biomolecules. Also exhibits THF-independent aldolase activity toward beta-hydroxyamino acids, producing glycine and aldehydes, via a retro-aldol mechanism. The polypeptide is Serine hydroxymethyltransferase (Shigella sonnei (strain Ss046)).